The following is a 312-amino-acid chain: Protoheme IX farnesyltransferase (312 aa).

9 helical membrane passes run 29-49 (VMSL…GHMN), 50-70 (PVLA…SGAL), 90-110 (IPAG…LSAF), 117-137 (LMVN…YAVV), 150-170 (IVIG…AATG), 177-197 (VVLF…LSLF), 223-243 (ALFY…LGFA), 248-268 (GAIS…MWVA), and 292-312 (LFAV…FGGF).

Belongs to the UbiA prenyltransferase family. Protoheme IX farnesyltransferase subfamily.

It localises to the cell inner membrane. It catalyses the reaction heme b + (2E,6E)-farnesyl diphosphate + H2O = Fe(II)-heme o + diphosphate. The protein operates within porphyrin-containing compound metabolism; heme O biosynthesis; heme O from protoheme: step 1/1. Its function is as follows. Converts heme B (protoheme IX) to heme O by substitution of the vinyl group on carbon 2 of heme B porphyrin ring with a hydroxyethyl farnesyl side group. The protein is Protoheme IX farnesyltransferase of Brucella anthropi (strain ATCC 49188 / DSM 6882 / CCUG 24695 / JCM 21032 / LMG 3331 / NBRC 15819 / NCTC 12168 / Alc 37) (Ochrobactrum anthropi).